The chain runs to 420 residues: MVEKRFQPLARDAMAYVLAGGRGSRLKELTDRRAKPAVYFGGKTRIIDFALSNALNSGIRRIGVATQYKAHSLIRHMQRGWNFFRPERNESFDILPASQRVSETQWYEGTADAVYQNIDIIEPYGPEYMVILAGDHIYKMDYEWMLQQHVDSGAEVTIGCLEVPRMEAVGFGVMHVDEKDQIIDFVEKPADPPGIPGNPDFALASMGIYVFHTKFLIECLKRDAADPNSSRDFGKDIIPYIVKNGKAVAHRFAQSCVRSDFEREAYWRDVGTIDAYWQANIDLTAVVPELDIYDKSWPIWTYAEISPPAKFVHDDENRRGSAVSSVVAGDCIISGASLSNSLLFTGVRANSYSKLEGAVVLPSVKVGRHAQLKNVVIDHGVNIPEGLVVGEDPQLDAKRFRRTESGICLITQTMIDKLDI.

Alpha-D-glucose 1-phosphate contacts are provided by residues Tyr107, Gly172, 187 to 188, and Ser205; that span reads EK.

This sequence belongs to the bacterial/plant glucose-1-phosphate adenylyltransferase family. As to quaternary structure, homotetramer.

It catalyses the reaction alpha-D-glucose 1-phosphate + ATP + H(+) = ADP-alpha-D-glucose + diphosphate. Its pathway is glycan biosynthesis; glycogen biosynthesis. Involved in the biosynthesis of ADP-glucose, a building block required for the elongation reactions to produce glycogen. Catalyzes the reaction between ATP and alpha-D-glucose 1-phosphate (G1P) to produce pyrophosphate and ADP-Glc. The chain is Glucose-1-phosphate adenylyltransferase from Rhizobium rhizogenes (strain K84 / ATCC BAA-868) (Agrobacterium radiobacter).